Consider the following 206-residue polypeptide: dITP/XTP pyrophosphatase (206 aa).

Position 7–12 (7–12) interacts with substrate; sequence SNNAKK. Asp-72 (proton acceptor) is an active-site residue. Asp-72 contacts Mg(2+). Substrate is bound by residues Ser-73, 155–158, Lys-182, and 187–188; these read FGYD and HR.

Belongs to the HAM1 NTPase family. Homodimer. The cofactor is Mg(2+).

The catalysed reaction is XTP + H2O = XMP + diphosphate + H(+). It carries out the reaction dITP + H2O = dIMP + diphosphate + H(+). The enzyme catalyses ITP + H2O = IMP + diphosphate + H(+). In terms of biological role, pyrophosphatase that catalyzes the hydrolysis of nucleoside triphosphates to their monophosphate derivatives, with a high preference for the non-canonical purine nucleotides XTP (xanthosine triphosphate), dITP (deoxyinosine triphosphate) and ITP. Seems to function as a house-cleaning enzyme that removes non-canonical purine nucleotides from the nucleotide pool, thus preventing their incorporation into DNA/RNA and avoiding chromosomal lesions. This Corynebacterium glutamicum (strain ATCC 13032 / DSM 20300 / JCM 1318 / BCRC 11384 / CCUG 27702 / LMG 3730 / NBRC 12168 / NCIMB 10025 / NRRL B-2784 / 534) protein is dITP/XTP pyrophosphatase.